The primary structure comprises 2101 residues: General transcription factor 3C polypeptide 1 (2101 aa).

Acidic residues predominate over residues 473 to 487 (GEEAFLSDSESEEES). 2 disordered regions span residues 473–574 (GEEA…MDSH) and 588–609 (NPKEGGGSQKGGRHGSSQDKPH). Over residues 492-503 (GKRRGRGSRGHA) the composition is skewed to basic residues. Low complexity predominate over residues 504–513 (RASGDAGSGS). Lys534 participates in a covalent cross-link: Glycyl lysine isopeptide (Lys-Gly) (interchain with G-Cter in SUMO2). Phosphoserine is present on Ser667. Disordered stretches follow at residues 718–772 (STAN…EKMG) and 820–864 (GEQP…SSWE). The segment covering 747 to 759 (RSANSDPNTSSKP) has biased composition (polar residues). 2 stretches are compositionally biased toward basic and acidic residues: residues 760–771 (ESTRVKKTDEKM) and 826–836 (HSERKTGKQES). Glycyl lysine isopeptide (Lys-Gly) (interchain with G-Cter in SUMO2) cross-links involve residues Lys770 and Lys833. Ser1063 bears the Phosphoserine mark. The span at 1186–1196 (EEQFELDREPT) shows a compositional bias: basic and acidic residues. Disordered stretches follow at residues 1186 to 1239 (EEQF…KKLR), 1598 to 1627 (KSLGKDGGLDDDEEEEDLDEGSGTKRQGVE), and 1822 to 1923 (DTKA…QENQ). Thr1196 carries the phosphothreonine modification. The segment covering 1199 to 1215 (RNRKVRGGKSQKRKRLK) has biased composition (basic residues). The segment covering 1229–1239 (EHPEAKSKKLR) has biased composition (basic and acidic residues). Over residues 1606–1617 (LDDDEEEEDLDE) the composition is skewed to acidic residues. Residues 1822 to 1831 (DTKASGDDSQ) show a composition bias toward basic and acidic residues. A phosphoserine mark is found at Ser1854 and Ser1890. Residues 1900 to 1910 (EAQAPAQLAAP) are compositionally biased toward low complexity.

Belongs to the TFIIIC subunit 1 family. As to quaternary structure, part of the TFIIIC subcomplex TFIIIC2, consisting of six subunits, GTF3C1, GTF3C2, GTF3C3, GTF3C4, GTF3C5 and GTF3C6. Interacts with IGHMBP2. Interacts with MAF1.

The protein localises to the nucleus. In terms of biological role, required for RNA polymerase III-mediated transcription. Component of TFIIIC that initiates transcription complex assembly on tRNA and is required for transcription of 5S rRNA and other stable nuclear and cytoplasmic RNAs. Binds to the box B promoter element. In Mus musculus (Mouse), this protein is General transcription factor 3C polypeptide 1 (Gtf3c1).